Here is a 130-residue protein sequence, read N- to C-terminus: Galectin-2 (130 aa).

A Galectin domain is found at 4 to 130 (KFEVKDLNMK…GLQISSFKLE (127 aa)). 65-71 (WGQEQRE) is a binding site for a beta-D-galactoside.

Homodimer.

This protein binds beta-galactoside. Its physiological function is not yet known. This Mus musculus (Mouse) protein is Galectin-2 (Lgals2).